A 702-amino-acid chain; its full sequence is Elongation factor G 2 (702 aa).

The tr-type G domain occupies 8-285 (DMVRNIGISA…AVTYYLPSPA (278 aa)). GTP-binding positions include 17-24 (AHIDSGKT), 84-88 (DTPGH), and 138-141 (NKLD).

It belongs to the TRAFAC class translation factor GTPase superfamily. Classic translation factor GTPase family. EF-G/EF-2 subfamily.

The protein localises to the cytoplasm. In terms of biological role, catalyzes the GTP-dependent ribosomal translocation step during translation elongation. During this step, the ribosome changes from the pre-translocational (PRE) to the post-translocational (POST) state as the newly formed A-site-bound peptidyl-tRNA and P-site-bound deacylated tRNA move to the P and E sites, respectively. Catalyzes the coordinated movement of the two tRNA molecules, the mRNA and conformational changes in the ribosome. This chain is Elongation factor G 2, found in Bdellovibrio bacteriovorus (strain ATCC 15356 / DSM 50701 / NCIMB 9529 / HD100).